A 116-amino-acid polypeptide reads, in one-letter code: Anti-sigma F factor antagonist (116 aa).

The STAS domain occupies 3–113 (LSIELEFKQD…PNEANALQKL (111 aa)). Ser-58 carries the phosphoserine modification.

Belongs to the anti-sigma-factor antagonist family. Phosphorylated by SpoIIAB on a serine residue.

In terms of biological role, in the phosphorylated form it could act as an anti-anti-sigma factor that counteracts SpoIIAB and thus releases sigma f from inhibition. The protein is Anti-sigma F factor antagonist (spoIIAA) of Priestia megaterium (Bacillus megaterium).